The sequence spans 773 residues: Carnitine O-palmitoyltransferase 1, liver isoform (773 aa).

Ala-2 bears the N-acetylalanine mark. Topologically, residues 2–47 (AEAHQAVAFQFTVTPDGIDLRLSHEALKQICLSGLHSWKKKFIRFK) are cytoplasmic. A helical transmembrane segment spans residues 48-73 (NGIITGVFPANPSSWLIVVVGVISSM). Residues 74–102 (HAKVDPSLGMIAKISRTLDTTGRMSSQTK) lie on the Mitochondrial intermembrane side of the membrane. A helical membrane pass occupies residues 103–122 (NIVSGVLFGTGLWVAVIMTM). Residues 123–773 (RYSLKVLLSY…LFGLTINSKK (651 aa)) are Cytoplasmic-facing. At Tyr-282 the chain carries 3'-nitrotyrosine. The active-site Proton acceptor is His-473. 555–567 (GKGLIKKCRTSPD) lines the CoA pocket. Position 588 is a phosphothreonine (Thr-588). The residue at position 589 (Tyr-589) is a 3'-nitrotyrosine. Tyr-589 and Thr-602 together coordinate (R)-carnitine. A Phosphothreonine modification is found at Thr-604. Residues Ser-741 and Ser-747 each carry the phosphoserine modification.

It belongs to the carnitine/choline acetyltransferase family. Homohexamer and homotrimer. Identified in a complex that contains at least CPT1A, ACSL1 and VDAC1. Also identified in complexes with ACSL1 and VDAC2 and VDAC3. Interacts with ZDHHC4. In terms of tissue distribution, liver and kidney.

Its subcellular location is the mitochondrion outer membrane. The enzyme catalyses (R)-carnitine + hexadecanoyl-CoA = O-hexadecanoyl-(R)-carnitine + CoA. It catalyses the reaction succinyl-CoA + L-lysyl-[protein] = N(6)-succinyl-L-lysyl-[protein] + CoA + H(+). Its pathway is lipid metabolism; fatty acid beta-oxidation. Its activity is regulated as follows. Inhibited by malonyl-CoA. Functionally, catalyzes the transfer of the acyl group of long-chain fatty acid-CoA conjugates onto carnitine, an essential step for the mitochondrial uptake of long-chain fatty acids and their subsequent beta-oxidation in the mitochondrion. Also possesses a lysine succinyltransferase activity that can regulate enzymatic activity of substrate proteins such as ENO1 and metabolism independent of its classical carnitine O-palmitoyltransferase activity. Plays an important role in hepatic triglyceride metabolism. Also plays a role in inducible regulatory T-cell (iTreg) differentiation once activated by butyryl-CoA that antagonizes malonyl-CoA-mediated CPT1A repression. Sustains the IFN-I response by recruiting ZDHCC4 to palmitoylate MAVS at the mitochondria leading to MAVS stabilization and activation. The chain is Carnitine O-palmitoyltransferase 1, liver isoform (Cpt1a) from Rattus norvegicus (Rat).